The chain runs to 116 residues: MHIIHISKFMALLAISTIAIPTRGRSEVDSRDVNQAQTVTSGSSIAPSGSEKRPAWKAEFAEQIAEAQRDKKPFQCPHCKDGISNRVALYTHVKAFHGDKPVYSLKNYHDERRFDS.

An N-terminal signal peptide occupies residues 1-24 (MHIIHISKFMALLAISTIAIPTRG). The interval 24-53 (GRSEVDSRDVNQAQTVTSGSSIAPSGSEKR) is disordered. Residues 33 to 47 (VNQAQTVTSGSSIAP) show a composition bias toward polar residues. The segment at 74-96 (FQCPHCKDGISNRVALYTHVKAF) adopts a C2H2-type; degenerate zinc-finger fold.

The protein resides in the secreted. Its subcellular location is the host nucleus. In terms of biological role, probable secreted effector that translocates into the nuclei of host cells to reprogram the expression of targeted genes by binding on effector binding elements in rice. The polypeptide is Host transcription reprogramming factor 4 (Pyricularia oryzae (strain 70-15 / ATCC MYA-4617 / FGSC 8958) (Rice blast fungus)).